Consider the following 552-residue polypeptide: Glucose-6-phosphate isomerase (552 aa).

Glu357 serves as the catalytic Proton donor. Active-site residues include His388 and Lys516. Residues 525–552 form a disordered region; the sequence is ELASTKPPKHDSSTNALIERYRTRGCRS.

It belongs to the GPI family.

It is found in the cytoplasm. It carries out the reaction alpha-D-glucose 6-phosphate = beta-D-fructose 6-phosphate. Its pathway is carbohydrate biosynthesis; gluconeogenesis. The protein operates within carbohydrate degradation; glycolysis; D-glyceraldehyde 3-phosphate and glycerone phosphate from D-glucose: step 2/4. Its function is as follows. Catalyzes the reversible isomerization of glucose-6-phosphate to fructose-6-phosphate. The polypeptide is Glucose-6-phosphate isomerase (Laribacter hongkongensis (strain HLHK9)).